The sequence spans 368 residues: Protein Wnt-1 (368 aa).

Residues 1–25 form the signal peptide; that stretch reads MRGPALLLALRALCALSALRGTARA. Intrachain disulfides connect cysteine 91–cysteine 102, cysteine 141–cysteine 149, cysteine 151–cysteine 168, cysteine 216–cysteine 230, cysteine 218–cysteine 225, cysteine 297–cysteine 328, cysteine 313–cysteine 323, cysteine 327–cysteine 367, cysteine 343–cysteine 358, cysteine 345–cysteine 355, and cysteine 350–cysteine 351. A lipid anchor (O-palmitoleoyl serine; by PORCN) is attached at serine 222.

This sequence belongs to the Wnt family. In terms of assembly, forms a soluble 1:1 complex with AFM; this prevents oligomerization and is required for prolonged biological activity. The complex with AFM may represent the physiological form in body fluids. Interacts with PORCN. In terms of processing, N-glycosylated. N-glycosylation favors subsequent palmitoleoylation. Palmitoleoylation is required for efficient binding to frizzled receptors. Palmitoleoylation is necessary for proper trafficking to cell surface. Depalmitoleoylated by NOTUM, leading to inhibit Wnt signaling pathway.

It is found in the secreted. It localises to the extracellular space. The protein localises to the extracellular matrix. Its function is as follows. Ligand for members of the frizzled family of seven transmembrane receptors. Acts in the canonical Wnt signaling pathway by promoting beta-catenin-dependent transcriptional activation. Developmental protein that promotes cell proliferation in the developing spinal cord. Has a role in osteoblast function, bone development and bone homeostasis. The polypeptide is Protein Wnt-1 (WNT1) (Gallus gallus (Chicken)).